We begin with the raw amino-acid sequence, 2472 residues long: Telomere-associated protein RIF1 (2472 aa).

Residues 1-25 (MTARGQSPLAPLLETLEDPSASHGG) are disordered. Serine 402 bears the Phosphoserine mark. Threonine 409 carries the post-translational modification Phosphothreonine. 3 positions are modified to phosphoserine: serine 782, serine 979, and serine 1008. A Phosphothreonine modification is found at threonine 1047. Residues 1145 to 1192 (LEKSSLSNNECGSLDKTSPEMSNSNNDERKKALISSRKTSTECASSTE) form a disordered region. The segment covering 1148–1169 (SSLSNNECGSLDKTSPEMSNSN) has biased composition (polar residues). At serine 1162 the chain carries Phosphoserine. Threonine 1220 is modified (phosphothreonine). A phosphoserine mark is found at serine 1236 and serine 1238. Basic and acidic residues-rich tracts occupy residues 1265 to 1279 (AKQR…DSEK) and 1306 to 1315 (MRSEPEKNTE). 3 disordered regions span residues 1265–1318 (AKQR…EESV), 1398–1464 (MVNE…DVLP), and 1479–1587 (IEKG…DQEE). The segment covering 1400–1412 (NEDSQVQITPNQK) has biased composition (polar residues). Serine 1422, serine 1454, and serine 1513 each carry phosphoserine. Composition is skewed to basic and acidic residues over residues 1431-1464 (SQDK…DVLP) and 1500-1530 (EQNK…EKLV). A Phosphothreonine modification is found at threonine 1518. Phosphoserine occurs at positions 1542, 1552, 1554, 1556, and 1564. Positions 1565–1574 (RKKRSGKWKN) are enriched in basic residues. Phosphoserine occurs at positions 1576, 1579, 1613, 1616, 1688, 1693, 1706, and 1709. Residues 1762 to 1782 (TKKADVQAPVSPSETSQANPY) are disordered. Over residues 1771–1782 (VSPSETSQANPY) the composition is skewed to polar residues. Phosphothreonine is present on threonine 1806. Serine 1810 is modified (phosphoserine). Polar residues predominate over residues 1846–1859 (AMSLESQESPNENF). The disordered stretch occupies residues 1846–1889 (AMSLESQESPNENFKTVGPCLGDSKNVSQESLETKEEKPEETPK). Phosphoserine is present on residues serine 1873 and serine 1876. Over residues 1877-1889 (LETKEEKPEETPK) the composition is skewed to basic and acidic residues. An interaction with condensed chromosomes in telophase region spans residues 1924–2472 (EASFHGQERT…WRSPSHENSI (549 aa)). 2 positions are modified to phosphoserine: serine 1926 and serine 1971. A disordered region spans residues 1992-2021 (EQTAAGELDGGNDVSDLHSSEETNTKMKNN). The span at 2006–2021 (SDLHSSEETNTKMKNN) shows a compositional bias: basic and acidic residues. Phosphoserine is present on residues serine 2144 and serine 2161. Threonine 2167 carries the post-translational modification Phosphothreonine. The interaction with ERCC6 stretch occupies residues 2170-2446 (VWSPLASPST…SGSQLFEMHE (277 aa)). 5 positions are modified to phosphoserine: serine 2172, serine 2176, serine 2195, serine 2196, and serine 2205. The segment covering 2227 to 2255 (RSHSSNSSPIGKSVKTSPTTQSKHNTTSA) has biased composition (polar residues). The disordered stretch occupies residues 2227–2269 (RSHSSNSSPIGKSVKTSPTTQSKHNTTSAKGFLSPGSRSPKFK). Serine 2260, serine 2339, serine 2391, serine 2393, serine 2465, and serine 2471 each carry phosphoserine.

The protein belongs to the RIF1 family. In terms of assembly, interacts with TP53BP1 (when phosphorylated by ATM). May interact with TRF2. Interacts with SHLD2. Interacts with ERCC6 (via WHD region). Interacts with ASTE1. In terms of tissue distribution, highly expressed in testis.

The protein localises to the nucleus. It is found in the chromosome. The protein resides in the telomere. It localises to the cytoplasm. Its subcellular location is the cytoskeleton. The protein localises to the spindle. Key regulator of TP53BP1 that plays a key role in the repair of double-strand DNA breaks (DSBs) in response to DNA damage: acts by promoting non-homologous end joining (NHEJ)-mediated repair of DSBs. In response to DNA damage, interacts with ATM-phosphorylated TP53BP1. Interaction with TP53BP1 leads to dissociate the interaction between NUDT16L1/TIRR and TP53BP1, thereby unmasking the tandem Tudor-like domain of TP53BP1 and allowing recruitment to DNA DSBs. Once recruited to DSBs, RIF1 and TP53BP1 act by promoting NHEJ-mediated repair of DSBs. In the same time, RIF1 and TP53BP1 specifically counteract the function of BRCA1 by blocking DSBs resection via homologous recombination (HR) during G1 phase. Also required for immunoglobulin class-switch recombination (CSR) during antibody genesis, a process that involves the generation of DNA DSBs. Promotes NHEJ of dysfunctional telomeres. This chain is Telomere-associated protein RIF1, found in Homo sapiens (Human).